The chain runs to 585 residues: Ras-specific guanine nucleotide-releasing factor RalGPS1 (585 aa).

In terms of domain architecture, Ras-GEF spans 50–289; sequence TPEEFASQIT…YKLSLRIEPG (240 aa). 2 disordered regions span residues 289-342 and 378-410; these read GSSS…KSHS and RSPRRGLTHTSSTAITNGLSLGSSESSEFSEEM. Residues 303–312 are compositionally biased toward low complexity; it reads AGPSAGSSSA. Positions 330–333 match the PXXP motif; that stretch reads PTPP. Residues 385-396 are compositionally biased toward polar residues; it reads THTSSTAITNGL. A PH domain is found at 459 to 571; the sequence is VPTMEGPLRR…WHKHLDDACK (113 aa). The tract at residues 461 to 585 is required for stimulation of nucleotide exchange by RALA; it reads TMEGPLRRKT…QVPANLMSFE (125 aa).

Interacts with the SH3 domains of GRB2, NCK1, PLCG1 and SRC.

The protein resides in the cytoplasm. Its subcellular location is the cell membrane. Functionally, guanine nucleotide exchange factor for the small GTPase RALA. May be involved in cytoskeleton organization. The polypeptide is Ras-specific guanine nucleotide-releasing factor RalGPS1 (Ralgps1) (Mus musculus (Mouse)).